The primary structure comprises 511 residues: Bifunctional purine biosynthesis protein PurH (511 aa).

The region spanning 1–145 is the MGS-like domain; that stretch reads MKKRALVSVS…KNHKFVSVIV (145 aa).

Belongs to the PurH family.

It catalyses the reaction (6R)-10-formyltetrahydrofolate + 5-amino-1-(5-phospho-beta-D-ribosyl)imidazole-4-carboxamide = 5-formamido-1-(5-phospho-D-ribosyl)imidazole-4-carboxamide + (6S)-5,6,7,8-tetrahydrofolate. The enzyme catalyses IMP + H2O = 5-formamido-1-(5-phospho-D-ribosyl)imidazole-4-carboxamide. Its pathway is purine metabolism; IMP biosynthesis via de novo pathway; 5-formamido-1-(5-phospho-D-ribosyl)imidazole-4-carboxamide from 5-amino-1-(5-phospho-D-ribosyl)imidazole-4-carboxamide (10-formyl THF route): step 1/1. The protein operates within purine metabolism; IMP biosynthesis via de novo pathway; IMP from 5-formamido-1-(5-phospho-D-ribosyl)imidazole-4-carboxamide: step 1/1. The sequence is that of Bifunctional purine biosynthesis protein PurH from Bacillus cereus (strain ATCC 10987 / NRS 248).